A 514-amino-acid chain; its full sequence is Adenylosuccinate synthetase 1, chloroplastic (514 aa).

The transit peptide at 1–73 (MAMAAAAAVA…AQAIERESVK (73 aa)) directs the protein to the chloroplast. GTP-binding positions include 100–106 (GDEGKGK) and 128–130 (GHT). The Proton acceptor role is filled by D101. 2 residues coordinate Mg(2+): D101 and G128. Residues 101 to 104 (DEGK), 126 to 129 (NAGH), T218, R232, Q312, T327, and R391 contribute to the IMP site. H129 serves as the catalytic Proton donor. Substrate is bound at residue 387–393 (TTTGRPR). Residues R393, 419–421 (KLD), and 502–504 (GVG) each bind GTP.

Belongs to the adenylosuccinate synthetase family. Homodimer. Requires Mg(2+) as cofactor.

The protein resides in the plastid. It localises to the chloroplast. It carries out the reaction IMP + L-aspartate + GTP = N(6)-(1,2-dicarboxyethyl)-AMP + GDP + phosphate + 2 H(+). It functions in the pathway purine metabolism; AMP biosynthesis via de novo pathway; AMP from IMP: step 1/2. Functionally, plays an important role in the de novo pathway and in the salvage pathway of purine nucleotide biosynthesis. Catalyzes the first committed step in the biosynthesis of AMP from IMP. This chain is Adenylosuccinate synthetase 1, chloroplastic, found in Physcomitrium patens (Spreading-leaved earth moss).